The following is a 115-amino-acid chain: WLMIVEQKCRVIVMLAKCFEAGKKKCQKYWPDSKETKTFGRVKVFNVEEVKYCGFLRRRFHIESVDEVITMEVFQYQYINWPDHSVPNTTSNLVRMHKYVIQCLEETGGDAPMVV.

The 115-residue stretch at 1–115 folds into the Tyrosine-protein phosphatase domain; the sequence is WLMIVEQKCR…ETGGDAPMVV (115 aa). D83 contributes to the substrate binding site.

Belongs to the protein-tyrosine phosphatase family.

The catalysed reaction is O-phospho-L-tyrosyl-[protein] + H2O = L-tyrosyl-[protein] + phosphate. The sequence is that of Tyrosine-protein phosphatase 22 (STY-22) from Styela plicata (Wrinkled sea squirt).